A 297-amino-acid polypeptide reads, in one-letter code: Aspartate carbamoyltransferase catalytic subunit (297 aa).

The carbamoyl phosphate site is built by R49 and T50. K77 is a binding site for L-aspartate. The carbamoyl phosphate site is built by R99, H129, and Q132. Residues R162 and R215 each coordinate L-aspartate. Residues G256 and P257 each coordinate carbamoyl phosphate.

The protein belongs to the aspartate/ornithine carbamoyltransferase superfamily. ATCase family. In terms of assembly, heterododecamer (2C3:3R2) of six catalytic PyrB chains organized as two trimers (C3), and six regulatory PyrI chains organized as three dimers (R2).

It carries out the reaction carbamoyl phosphate + L-aspartate = N-carbamoyl-L-aspartate + phosphate + H(+). It functions in the pathway pyrimidine metabolism; UMP biosynthesis via de novo pathway; (S)-dihydroorotate from bicarbonate: step 2/3. Its function is as follows. Catalyzes the condensation of carbamoyl phosphate and aspartate to form carbamoyl aspartate and inorganic phosphate, the committed step in the de novo pyrimidine nucleotide biosynthesis pathway. This Legionella pneumophila subsp. pneumophila (strain Philadelphia 1 / ATCC 33152 / DSM 7513) protein is Aspartate carbamoyltransferase catalytic subunit.